We begin with the raw amino-acid sequence, 903 residues long: E3 ubiquitin-protein ligase DDB_G0292642 (903 aa).

Disordered regions lie at residues 115–137 (FTLP…SSSD), 167–236 (LLKR…VIGS), 284–366 (VNKT…NNLK), 415–487 (TPSL…TTEI), and 549–576 (DDSE…GSEG). Low complexity-rich tracts occupy residues 120–130 (TTNNNNNNTTN) and 178–216 (TTTT…TIDT). The segment covering 217-232 (SSEDDDESISSSDDDI) has biased composition (acidic residues). Low complexity-rich tracts occupy residues 287 to 301 (TSTT…TTTT) and 311 to 323 (NRNN…NNNN). The stretch at 313-352 (NNNNNNNNNNNKRFEIESEEESETDISSEEEENNNNNNNN) forms a coiled coil. Residues 329-345 (ESEEESETDISSEEEEN) are compositionally biased toward acidic residues. Positions 346–364 (NNNNNNNSNNNNNSNNNNN) are enriched in low complexity. Residues 415 to 427 (TPSLRLSSAHLPN) are compositionally biased toward polar residues. Over residues 428 to 443 (TTTTTTTTTTTTTTTT) the composition is skewed to low complexity. 2 stretches are compositionally biased toward acidic residues: residues 451–466 (NDDD…DSEI) and 549–568 (DDSE…ESDS). Residues 542-569 (AELVFEYDDSEEEEEEEEEEEGEESDSE) adopt a coiled-coil conformation. Residues 612 to 832 (EPVECKICYM…NEYPECFDRQ (221 aa)) are TRIAD supradomain. 18 residues coordinate Zn(2+): C616, C619, C634, H636, C639, C642, C661, C666, C704, C709, C725, C728, C733, C736, H741, C746, C782, and C785. The RING-type 1 zinc finger occupies 616-666 (CKICYMEYDQSNEVFTLECDHVYCFDCITEHLRILITEGRVLDISCPHPQC). The IBR-type zinc finger occupies 683–746 (NWLKYQKFSM…GEYSHEGAKC (64 aa)). The segment at 782–811 (CPTCKSHIEKHDGCNHMTCINCQHQFCWLC) adopts an RING-type 2; atypical zinc-finger fold. C795 is a catalytic residue. Zn(2+) is bound by residues C800, C803, C808, C811, H819, and C828. A helical transmembrane segment spans residues 864–884 (TAAFTVGAPLLLIGGAVLLCV).

It belongs to the RBR family. RNF14 subfamily.

Its subcellular location is the membrane. It catalyses the reaction [E2 ubiquitin-conjugating enzyme]-S-ubiquitinyl-L-cysteine + [acceptor protein]-L-lysine = [E2 ubiquitin-conjugating enzyme]-L-cysteine + [acceptor protein]-N(6)-ubiquitinyl-L-lysine.. The protein operates within protein modification; protein ubiquitination. Its function is as follows. E3 ubiquitin-protein ligase. The chain is E3 ubiquitin-protein ligase DDB_G0292642 from Dictyostelium discoideum (Social amoeba).